The primary structure comprises 140 residues: MKIALIAHDRQKPLIVKLATAYQPILAQHELFATGTTGQKIIDATGLSVKRFKSGPLGGDQQIGALISENKMDLVIFLRDPLTAQPHEPDVNALIRLSDVYEVPLATNIGTAEVLLRGLDQGLMAFREVVHDQDSNPINL.

An MGS-like domain is found at 1–140 (MKIALIAHDR…HDQDSNPINL (140 aa)). Residues H8, K12, 34–37 (TGTT), and 54–55 (SG) each bind substrate. D60 (proton donor/acceptor) is an active-site residue. Substrate is bound at residue H87.

Belongs to the methylglyoxal synthase family.

It carries out the reaction dihydroxyacetone phosphate = methylglyoxal + phosphate. Functionally, catalyzes the formation of methylglyoxal from dihydroxyacetone phosphate. The sequence is that of Methylglyoxal synthase from Latilactobacillus sakei subsp. sakei (strain 23K) (Lactobacillus sakei subsp. sakei).